The primary structure comprises 1584 residues: Cilia- and flagella-associated protein 74 (1584 aa).

Residues 300–379 (RKFQAWDRAK…EAEEEKRKKQ (80 aa)) adopt a coiled-coil conformation. The span at 692–706 (SEQQLEGTESSQADM) shows a compositional bias: polar residues. The segment at 692–739 (SEQQLEGTESSQADMQSRKELEKLDKEQEEEQPAEPERLTTVIPPSEE) is disordered. Over residues 707–717 (QSRKELEKLDK) the composition is skewed to basic and acidic residues.

The protein belongs to the CFAP74 family.

It is found in the cytoplasm. Its subcellular location is the cytoskeleton. The protein resides in the cilium axoneme. The protein localises to the flagellum axoneme. Its function is as follows. As part of the central apparatus of the cilium axoneme may play a role in cilium movement. May play an important role in sperm architecture and function. In Homo sapiens (Human), this protein is Cilia- and flagella-associated protein 74.